We begin with the raw amino-acid sequence, 740 residues long: E3 ubiquitin-protein ligase TRIM9 (740 aa).

The segment at 7-30 (CPTCKQLYANPVLLPCFHALCLGC) adopts an RING-type; degenerate zinc-finger fold. The segment covering 64–73 (GNGGGAGGGA) has biased composition (gly residues). The disordered stretch occupies residues 64–114 (GNGGGAGGGAAAPVTNPNGPGTRHSSHSSAASTASSNTGSESVTSDQDQSD). Residues 74–105 (AAPVTNPNGPGTRHSSHSSAASTASSNTGSES) show a composition bias toward low complexity. Residues 195–244 (REALRCQMCETDPKVASLICEQCEIRYCDACRELTHPARGPLAKHTLVKP) form a B box-type 1; atypical zinc finger. Positions 200, 203, 225, 230, 255, 258, 277, and 283 each coordinate Zn(2+). The B box-type 2 zinc finger occupies 250-291 (QRESVCGEHEETLSQYCLSCKAPACGLCIGELRHQAHDVQSI). A coiled-coil region spans residues 294–324 (TCKAQKTELSHNLQQLSEKARSTTEFIQRLK). One can recognise a COS domain in the interval 399-459 (LKETDSAAFL…ARAIDNLNFI (61 aa)). Residues 474-567 (APMTPTILPS…ELIGLQTAEV (94 aa)) enclose the Fibronectin type-III domain. The 188-residue stretch at 549-736 (NSAGEGEYSE…TMHTAMDAPK (188 aa)) folds into the B30.2/SPRY domain.

The protein belongs to the TRIM/RBCC family. In terms of assembly, interacts (via fibronectin type-III domain) with pico. Interacts (via SPRY domain) with netrin receptor fra.

It is found in the cell projection. The protein localises to the axon. The protein resides in the perikaryon. The enzyme catalyses S-ubiquitinyl-[E2 ubiquitin-conjugating enzyme]-L-cysteine + [acceptor protein]-L-lysine = [E2 ubiquitin-conjugating enzyme]-L-cysteine + N(6)-ubiquitinyl-[acceptor protein]-L-lysine.. It participates in protein modification; protein ubiquitination. E3 ubiquitin-protein ligase activity. During embryonic and larval development, regulates the pattern of axonal projections of class IV nociceptive sensory neurons (C4da) downstream of netrin receptor fra. Regulates fine-scale topography of C4da axon terminals upon neuronal activity. During eye development, consolidates the attachment of R8 photoreceptor growth cones to the target medulla layer, probably downstream of fra. The chain is E3 ubiquitin-protein ligase TRIM9 from Drosophila melanogaster (Fruit fly).